We begin with the raw amino-acid sequence, 634 residues long: MINIRFPDGSIREFEAGVNSLDVAKSISPSLAKATMAAYIDDQLKDAKDAINSNCELRLITVKDPEGLEILRHSCAHLLAHAVKELYPNTEVTIGPVVDNGFYYDFSFKESIGEADLPTIEKKMKELAKKSAPVSYRVVPKAEAIEFFKAQGENYKVEIIDSIADEQMKIYTQDNFSDLCRGPHIPNTSVLKAFKLTKLAGAYWRGNSDNEMLTRIYGTCWATKEDLEQYLNMLEEAEKRDHRKIGKVLDLFHFQEDSPGIAFWHDNGVRIWRQVEDYMRASNNKYGCSEIRTPLIADFSLWQKSGHASKYAENMFATKSENRDFAIRPMNCPTCVQVYNTKLHSYRDLPIRMAEFGIVHRNEPSGSLHGLLRVRSFTQDDGHIFCTPEQVEEEVILMVQQCFEVYKDFGFNDFAIKIALRPENRIGDDETWDKSEQMLKNALDANNVSYELLPGEGAFYGPKIEFHLKDAIGRSWQCGTIQLDFSMPQRLGATYIDKNGEKQVPVMLHRAIVGSLERFIGMLIEHYAGNLPLWLAPVQVAVMGISNNQDDYCKEVFIMLEKNGIRAKLDLRNEKIGFKIREHTLLRVPYLVILGKNEQEQKIITIRKHSGEDLGQMSVDDFCAFLDKQIQAKE.

Positions 1-61 constitute a TGS domain; the sequence is MINIRFPDGS…NSNCELRLIT (61 aa). Residues 241–532 are catalytic; it reads DHRKIGKVLD…LIEHYAGNLP (292 aa). Cysteine 332, histidine 383, and histidine 509 together coordinate Zn(2+).

This sequence belongs to the class-II aminoacyl-tRNA synthetase family. In terms of assembly, homodimer. It depends on Zn(2+) as a cofactor.

It is found in the cytoplasm. The enzyme catalyses tRNA(Thr) + L-threonine + ATP = L-threonyl-tRNA(Thr) + AMP + diphosphate + H(+). Functionally, catalyzes the attachment of threonine to tRNA(Thr) in a two-step reaction: L-threonine is first activated by ATP to form Thr-AMP and then transferred to the acceptor end of tRNA(Thr). Also edits incorrectly charged L-seryl-tRNA(Thr). This chain is Threonine--tRNA ligase, found in Francisella tularensis subsp. tularensis (strain WY96-3418).